Here is a 158-residue protein sequence, read N- to C-terminus: Phosphopantetheine adenylyltransferase (158 aa).

T10 provides a ligand contact to substrate. ATP contacts are provided by residues 10-11 and H18; that span reads TF. Residues K42, L74, and R88 each contribute to the substrate site. Residues 89 to 91, E99, and 124 to 130 contribute to the ATP site; these read GLR and NSFISST.

This sequence belongs to the bacterial CoaD family. Homohexamer. The cofactor is Mg(2+).

The protein localises to the cytoplasm. The enzyme catalyses (R)-4'-phosphopantetheine + ATP + H(+) = 3'-dephospho-CoA + diphosphate. It participates in cofactor biosynthesis; coenzyme A biosynthesis; CoA from (R)-pantothenate: step 4/5. Its function is as follows. Reversibly transfers an adenylyl group from ATP to 4'-phosphopantetheine, yielding dephospho-CoA (dPCoA) and pyrophosphate. The sequence is that of Phosphopantetheine adenylyltransferase from Shewanella sediminis (strain HAW-EB3).